The sequence spans 464 residues: Chromosomal replication initiator protein DnaA (464 aa).

Residues methionine 1–proline 82 are domain I, interacts with DnaA modulators. Positions proline 82–serine 127 are domain II. Residues alanine 98–serine 113 show a composition bias toward low complexity. The disordered stretch occupies residues alanine 98 to alanine 117. The interval asparagine 128–alanine 344 is domain III, AAA+ region. ATP is bound by residues glycine 172, glycine 174, lysine 175, and threonine 176. The interval asparagine 345–serine 464 is domain IV, binds dsDNA.

This sequence belongs to the DnaA family. Oligomerizes as a right-handed, spiral filament on DNA at oriC.

It is found in the cytoplasm. Its function is as follows. Plays an important role in the initiation and regulation of chromosomal replication. Binds to the origin of replication; it binds specifically double-stranded DNA at a 9 bp consensus (dnaA box): 5'-TTATC[CA]A[CA]A-3'. DnaA binds to ATP and to acidic phospholipids. DnaA can inhibit its own gene expression as well as that of other genes. In terms of biological role, plays an essential role in the initiation and regulation of chromosomal replication. ATP-DnaA binds to the origin of replication (oriC) to initiate formation of the DNA replication initiation complex once per cell cycle. Binds the DnaA box (a 9 base pair repeat at the origin) and separates the double-stranded (ds)DNA. Forms a right-handed helical filament on oriC DNA; dsDNA binds to the exterior of the filament while single-stranded (ss)DNA is stabiized in the filament's interior. The ATP-DnaA-oriC complex binds and stabilizes one strand of the AT-rich DNA unwinding element (DUE), permitting loading of DNA polymerase. After initiation quickly degrades to an ADP-DnaA complex that is not apt for DNA replication. Binds acidic phospholipids. In Serratia marcescens, this protein is Chromosomal replication initiator protein DnaA.